The primary structure comprises 206 residues: FMN-dependent NADH:quinone oxidoreductase (206 aa).

FMN is bound by residues 15–17 (SVS), 94–97 (MYNF), and 138–141 (TRGG).

The protein belongs to the azoreductase type 1 family. Homodimer. FMN serves as cofactor.

The enzyme catalyses 2 a quinone + NADH + H(+) = 2 a 1,4-benzosemiquinone + NAD(+). The catalysed reaction is N,N-dimethyl-1,4-phenylenediamine + anthranilate + 2 NAD(+) = 2-(4-dimethylaminophenyl)diazenylbenzoate + 2 NADH + 2 H(+). Its function is as follows. Quinone reductase that provides resistance to thiol-specific stress caused by electrophilic quinones. Functionally, also exhibits azoreductase activity. Catalyzes the reductive cleavage of the azo bond in aromatic azo compounds to the corresponding amines. The sequence is that of FMN-dependent NADH:quinone oxidoreductase from Sinorhizobium medicae (strain WSM419) (Ensifer medicae).